We begin with the raw amino-acid sequence, 316 residues long: D-alanine--D-alanine ligase (316 aa).

Positions 129–316 (KYILQAAGIP…ALQAEFCRYP (188 aa)) constitute an ATP-grasp domain. 162-217 (EGSLLYPMFIKPANMGSSVGITKAENREELQNALQEAYRYDTRAIVEQGIEAREIE) contributes to the ATP binding site. Residues aspartate 288, glutamate 301, and asparagine 303 each coordinate Mg(2+).

It belongs to the D-alanine--D-alanine ligase family. Requires Mg(2+) as cofactor. Mn(2+) is required as a cofactor.

It is found in the cytoplasm. The enzyme catalyses 2 D-alanine + ATP = D-alanyl-D-alanine + ADP + phosphate + H(+). It functions in the pathway cell wall biogenesis; peptidoglycan biosynthesis. Functionally, cell wall formation. This chain is D-alanine--D-alanine ligase (ddl), found in Enterococcus gallinarum.